A 190-amino-acid polypeptide reads, in one-letter code: MANLKLLLVGIGNPGQKYVHNRHNIGFVILDSLLDSSSVSYQTNSKYSLARTDEDGVTIFYLKPLEFMNLSGKSVAEIAKKNGISPENILIIHDEIDFEFGKLKLKGGGGHAGHNGLRNIVEKLGTNTFFRLRFGVGKPSITSEVPDYVLSNFLPNEKEKIPELVKVSLQKISDWIRERKNGFQKLSDNQ.

Tyr-18 is a binding site for tRNA. The active-site Proton acceptor is His-23. Residues Phe-67, Asn-69, and Asn-115 each contribute to the tRNA site.

This sequence belongs to the PTH family. Monomer.

It localises to the cytoplasm. The catalysed reaction is an N-acyl-L-alpha-aminoacyl-tRNA + H2O = an N-acyl-L-amino acid + a tRNA + H(+). Its function is as follows. Hydrolyzes ribosome-free peptidyl-tRNAs (with 1 or more amino acids incorporated), which drop off the ribosome during protein synthesis, or as a result of ribosome stalling. Catalyzes the release of premature peptidyl moieties from peptidyl-tRNA molecules trapped in stalled 50S ribosomal subunits, and thus maintains levels of free tRNAs and 50S ribosomes. The polypeptide is Peptidyl-tRNA hydrolase (Leptospira interrogans serogroup Icterohaemorrhagiae serovar Lai (strain 56601)).